The following is a 462-amino-acid chain: Glutamate--tRNA ligase 1 (462 aa).

The short motif at 8–18 is the 'HIGH' region element; that stretch reads PSPTGYLHIGG. The 'KMSKS' region signature appears at 236-240; the sequence is KLSKR. Residue Lys239 coordinates ATP.

This sequence belongs to the class-I aminoacyl-tRNA synthetase family. Glutamate--tRNA ligase type 1 subfamily. In terms of assembly, monomer.

It is found in the cytoplasm. It catalyses the reaction tRNA(Glu) + L-glutamate + ATP = L-glutamyl-tRNA(Glu) + AMP + diphosphate. Catalyzes the attachment of glutamate to tRNA(Glu) in a two-step reaction: glutamate is first activated by ATP to form Glu-AMP and then transferred to the acceptor end of tRNA(Glu). This chain is Glutamate--tRNA ligase 1, found in Sulfurovum sp. (strain NBC37-1).